We begin with the raw amino-acid sequence, 169 residues long: Cell division inhibitor SulA (169 aa).

Positions alanine 106–tyrosine 112 are ftsZ binding. The lon protease binding stretch occupies residues lysine 162–histidine 169.

The protein belongs to the SulA family. In terms of assembly, interacts with FtsZ. Is rapidly cleaved and degraded by the Lon protease once DNA damage is repaired.

In terms of biological role, component of the SOS system and an inhibitor of cell division. Accumulation of SulA causes rapid cessation of cell division and the appearance of long, non-septate filaments. In the presence of GTP, binds a polymerization-competent form of FtsZ in a 1:1 ratio, thus inhibiting FtsZ polymerization and therefore preventing it from participating in the assembly of the Z ring. This mechanism prevents the premature segregation of damaged DNA to daughter cells during cell division. In Escherichia coli O7:K1 (strain IAI39 / ExPEC), this protein is Cell division inhibitor SulA.